The following is a 107-amino-acid chain: Ig kappa chain V-VI region NQ6-8.3.1 (107 aa).

Residues 1–23 (QIVLTQSPAIMSASPGQKVTMTC) form a framework-1 region. A disulfide bond links cysteine 23 and cysteine 87. The complementarity-determining-1 stretch occupies residues 24 to 33 (SASSSVSYMH). The segment at 34–48 (WYQQKSGTSPKRWIY) is framework-2. The complementarity-determining-2 stretch occupies residues 49 to 55 (DTSKLAS). The tract at residues 56-87 (GXPARFSGSGSATSYSLTITSMQAEDAATYYC) is framework-3. The tract at residues 88–96 (QQWSSNPLT) is complementarity-determining-3. The tract at residues 97–106 (FGAGTKLELK) is framework-4.

In terms of biological role, anti-2-phenyl oxazolone (PHOX) Antibody. The polypeptide is Ig kappa chain V-VI region NQ6-8.3.1 (Mus musculus (Mouse)).